The following is a 122-amino-acid chain: UPF0102 protein R00337 (122 aa).

The protein belongs to the UPF0102 family.

This chain is UPF0102 protein R00337, found in Rhizobium meliloti (strain 1021) (Ensifer meliloti).